The following is a 282-amino-acid chain: D-alanine aminotransferase (282 aa).

Position 32 (Y32) interacts with substrate. R51 serves as a coordination point for pyridoxal 5'-phosphate. 2 residues coordinate substrate: R99 and H101. The Proton acceptor role is filled by K146. At K146 the chain carries N6-(pyridoxal phosphate)lysine. E178 is a binding site for pyridoxal 5'-phosphate.

This sequence belongs to the class-IV pyridoxal-phosphate-dependent aminotransferase family. As to quaternary structure, homodimer. It depends on pyridoxal 5'-phosphate as a cofactor.

The catalysed reaction is D-alanine + 2-oxoglutarate = D-glutamate + pyruvate. Acts on the D-isomers of alanine, leucine, aspartate, glutamate, aminobutyrate, norvaline and asparagine. The enzyme transfers an amino group from a substrate D-amino acid to the pyridoxal phosphate cofactor to form pyridoxamine and an alpha-keto acid in the first half-reaction. The second half-reaction is the reverse of the first, transferring the amino group from the pyridoxamine to a second alpha-keto acid to form the product D-amino acid via a ping-pong mechanism. This is an important process in the formation of D-alanine and D-glutamate, which are essential bacterial cell wall components. This is D-alanine aminotransferase (dat) from Staphylococcus aureus (strain MW2).